The primary structure comprises 100 residues: Co-chaperonin GroES (100 aa).

Belongs to the GroES chaperonin family. In terms of assembly, heptamer of 7 subunits arranged in a ring. Interacts with the chaperonin GroEL.

It localises to the cytoplasm. Functionally, together with the chaperonin GroEL, plays an essential role in assisting protein folding. The GroEL-GroES system forms a nano-cage that allows encapsulation of the non-native substrate proteins and provides a physical environment optimized to promote and accelerate protein folding. GroES binds to the apical surface of the GroEL ring, thereby capping the opening of the GroEL channel. The protein is Co-chaperonin GroES of Mycobacterium tuberculosis (strain CDC 1551 / Oshkosh).